The primary structure comprises 163 residues: Sperm acrosome membrane-associated protein 3 (163 aa).

A signal peptide spans 1–35 (MEAGSWAPRRWPRPPGIVLLALASVLSSLLSSGQA). Residues 36 to 163 (RVYSRCELAR…LSDWVDGCEL (128 aa)) enclose the C-type lysozyme domain. Disulfide bonds link Cys-41/Cys-161, Cys-65/Cys-149, Cys-99/Cys-114, and Cys-110/Cys-128.

It belongs to the glycosyl hydrolase 22 family. In terms of assembly, interacts with ASTL.

It is found in the secreted. Sperm surface membrane protein that may be involved in sperm-egg plasma membrane adhesion and fusion during fertilization. It could be a potential receptor for the egg oligosaccharide residue N-acetylglucosamine, which is present in the extracellular matrix over the egg plasma membrane. The processed form has no detectable bacteriolytic activity in vitro. This chain is Sperm acrosome membrane-associated protein 3 (SPACA3), found in Bos taurus (Bovine).